A 37-amino-acid chain; its full sequence is Large ribosomal subunit protein bL36 (37 aa).

It belongs to the bacterial ribosomal protein bL36 family.

The protein is Large ribosomal subunit protein bL36 of Koribacter versatilis (strain Ellin345).